Reading from the N-terminus, the 308-residue chain is uncharacterized protein (308 aa).

Positions 19 to 43 (EPQASGAGPAQTPPPVTVPMTPPSK) are disordered. The span at 29–43 (QTPPPVTVPMTPPSK) shows a compositional bias: pro residues.

This is an uncharacterized protein from Deinococcus radiodurans (strain ATCC 13939 / DSM 20539 / JCM 16871 / CCUG 27074 / LMG 4051 / NBRC 15346 / NCIMB 9279 / VKM B-1422 / R1).